The chain runs to 790 residues: Lon protease (790 aa).

Positions L23 to L220 constitute a Lon N-terminal domain. G372–T379 serves as a coordination point for ATP. Positions I608–R789 constitute a Lon proteolytic domain. Catalysis depends on residues S695 and K738.

Belongs to the peptidase S16 family. In terms of assembly, homohexamer. Organized in a ring with a central cavity.

Its subcellular location is the cytoplasm. The enzyme catalyses Hydrolysis of proteins in presence of ATP.. ATP-dependent serine protease that mediates the selective degradation of mutant and abnormal proteins as well as certain short-lived regulatory proteins. Required for cellular homeostasis and for survival from DNA damage and developmental changes induced by stress. Degrades polypeptides processively to yield small peptide fragments that are 5 to 10 amino acids long. Binds to DNA in a double-stranded, site-specific manner. This Syntrophus aciditrophicus (strain SB) protein is Lon protease.